A 249-amino-acid polypeptide reads, in one-letter code: Deoxyribose-phosphate aldolase (249 aa).

D105 acts as the Proton donor/acceptor in catalysis. The Schiff-base intermediate with acetaldehyde role is filled by K168. The active-site Proton donor/acceptor is K216.

This sequence belongs to the DeoC/FbaB aldolase family. DeoC type 1 subfamily.

The protein localises to the cytoplasm. It carries out the reaction 2-deoxy-D-ribose 5-phosphate = D-glyceraldehyde 3-phosphate + acetaldehyde. It functions in the pathway carbohydrate degradation; 2-deoxy-D-ribose 1-phosphate degradation; D-glyceraldehyde 3-phosphate and acetaldehyde from 2-deoxy-alpha-D-ribose 1-phosphate: step 2/2. Functionally, catalyzes a reversible aldol reaction between acetaldehyde and D-glyceraldehyde 3-phosphate to generate 2-deoxy-D-ribose 5-phosphate. In Corynebacterium jeikeium (strain K411), this protein is Deoxyribose-phosphate aldolase.